Consider the following 671-residue polypeptide: Autophagy-related protein 22-2 (671 aa).

2 stretches are compositionally biased toward polar residues: residues 1-10 (MVPRNFSESQ) and 19-34 (PSNSTKISYRSHSSSF). Residues 1 to 67 (MVPRNFSESQ…RDVPAQYAGE (67 aa)) are disordered. 2 N-linked (GlcNAc...) asparagine glycosylation sites follow: Asn-5 and Asn-21. The span at 39–60 (ERSSSADHDSMGPDIGSAHRDV) shows a compositional bias: basic and acidic residues. Transmembrane regions (helical) follow at residues 83-103 (YGFAAEVFVICGIGSFIPITL), 155-175 (SFAMYSFSLSVLFQAILVVSI), 188-208 (LLLFFAFAGSITTMLFLTVVP), and 212-232 (LLGALWAIISNTCFGASFVLL). A disordered region spans residues 251-271 (PDFSPEFRPSSVDESPPEHSL). The helical transmembrane segment at 324-344 (IGIGYSAGLFLQCVSIVIIWL) threads the bilayer. An N-linked (GlcNAc...) asparagine glycan is attached at Asn-346. A run of 7 helical transmembrane segments spans residues 354–374 (LVLFFIGLWWFLFTIPAALWL), 422–442 (FFLAAWFLLSDAIATVSGTAV), 457–477 (GLINVIATTAGVLGAFSWAAI), 491–511 (ACICIFEMIPLYGLLGFLPIV), 523–543 (WEMYPLGFVYGFVLGGLSSYC), 560–582 (YALYAITDKGSSVFGPAIVGAIV), and 591–611 (AFWFLAVLVGLPAPLIYFVNV). The tract at residues 634–671 (ESAGEGSRGSSIDHESGQNEGLIYPRVGENAGRGRNDI) is disordered.

This sequence belongs to the ATG22 family.

The protein localises to the vacuole membrane. Vacuolar effluxer which mediate the efflux of amino acids resulting from autophagic degradation. The release of autophagic amino acids allows the maintenance of protein synthesis and viability during nitrogen starvation. The polypeptide is Autophagy-related protein 22-2 (atg22-2) (Sclerotinia sclerotiorum (strain ATCC 18683 / 1980 / Ss-1) (White mold)).